The primary structure comprises 180 residues: Hypoxanthine-guanine phosphoribosyltransferase (180 aa).

Diphosphate contacts are provided by lysine 43 and glycine 44. The Mg(2+) site is built by glutamate 99 and aspartate 100. The Proton acceptor role is filled by aspartate 103. Residues lysine 131, 152–153 (FI), and aspartate 159 contribute to the GMP site. Residue arginine 165 participates in diphosphate binding.

The protein belongs to the purine/pyrimidine phosphoribosyltransferase family. Mg(2+) is required as a cofactor.

It localises to the cytoplasm. It catalyses the reaction IMP + diphosphate = hypoxanthine + 5-phospho-alpha-D-ribose 1-diphosphate. The enzyme catalyses GMP + diphosphate = guanine + 5-phospho-alpha-D-ribose 1-diphosphate. It functions in the pathway purine metabolism; IMP biosynthesis via salvage pathway; IMP from hypoxanthine: step 1/1. The protein operates within purine metabolism; GMP biosynthesis via salvage pathway; GMP from guanine: step 1/1. In terms of biological role, purine salvage pathway enzyme that catalyzes the transfer of the ribosyl-5-phosphate group from 5-phospho-alpha-D-ribose 1-diphosphate (PRPP) to the N9 position of the 6-oxopurines hypoxanthine and guanine to form the corresponding ribonucleotides IMP (inosine 5'-monophosphate) and GMP (guanosine 5'-monophosphate), with the release of PPi. This Streptococcus thermophilus (strain CNRZ 1066) protein is Hypoxanthine-guanine phosphoribosyltransferase (hpt).